The primary structure comprises 134 residues: Small ribosomal subunit protein bS6 (134 aa).

A disordered region spans residues 99–134 (PSQLAKSADEKRARKAPRSENFDNDQDDESNDDSDE). A compositionally biased stretch (basic and acidic residues) spans 105–119 (SADEKRARKAPRSEN). The span at 120–134 (FDNDQDDESNDDSDE) shows a compositional bias: acidic residues.

This sequence belongs to the bacterial ribosomal protein bS6 family.

In terms of biological role, binds together with bS18 to 16S ribosomal RNA. This Psychrobacter sp. (strain PRwf-1) protein is Small ribosomal subunit protein bS6.